The sequence spans 436 residues: Trigger factor (436 aa).

The PPIase FKBP-type domain occupies 163 to 248 (GDRVVLDFAG…VKEVAEGVLP (86 aa)).

Belongs to the FKBP-type PPIase family. Tig subfamily.

It is found in the cytoplasm. It carries out the reaction [protein]-peptidylproline (omega=180) = [protein]-peptidylproline (omega=0). Functionally, involved in protein export. Acts as a chaperone by maintaining the newly synthesized protein in an open conformation. Functions as a peptidyl-prolyl cis-trans isomerase. The sequence is that of Trigger factor from Bordetella bronchiseptica (strain ATCC BAA-588 / NCTC 13252 / RB50) (Alcaligenes bronchisepticus).